Reading from the N-terminus, the 266-residue chain is Protein-ADP-ribose hydrolase (266 aa).

In terms of domain architecture, Macro spans 74 to 265 (TDLKDLKPIK…LYKEAFNRDA (192 aa)). Residues D93, I94, and N107 each coordinate ADP-D-ribose. Residues C113, H118, and C120 each coordinate Zn(2+). Residues C120, I121, D122, S212, T213, G214, and F216 each contribute to the ADP-D-ribose site.

The protein belongs to the MacroD-type family. Zn-Macro subfamily. It depends on Zn(2+) as a cofactor.

The enzyme catalyses 4-O-(ADP-D-ribosyl)-L-aspartyl-[protein] + H2O = L-aspartyl-[protein] + ADP-D-ribose + H(+). In terms of biological role, ADP-ribosylhydrolase that specifically reverses the SirTM-mediated mono-ADP-ribosylation at an asparatate residue of GcvH-L, by releasing ADP-ribose from the target protein. May play a role in the regulation of the response to host-induced oxidative stress. This Staphylococcus aureus (strain COL) protein is Protein-ADP-ribose hydrolase.